The primary structure comprises 439 residues: GTPase Der (439 aa).

2 consecutive EngA-type G domains span residues 2 to 166 and 176 to 351; these read SVVA…PAPA and TRLA…IEFN. Residues 8–15, 55–59, 118–121, 182–189, 229–233, and 294–297 each bind GTP; these read GRPNVGKS, DTGGF, NKVD, DTAGI, and NKWD. Positions 352–436 constitute a KH-like domain; the sequence is RQVPTGVLNR…PIRLKFKDRN (85 aa).

The protein belongs to the TRAFAC class TrmE-Era-EngA-EngB-Septin-like GTPase superfamily. EngA (Der) GTPase family. In terms of assembly, associates with the 50S ribosomal subunit.

Its function is as follows. GTPase that plays an essential role in the late steps of ribosome biogenesis. In Syntrophotalea carbinolica (strain DSM 2380 / NBRC 103641 / GraBd1) (Pelobacter carbinolicus), this protein is GTPase Der.